Consider the following 698-residue polypeptide: uncharacterized protein (698 aa).

An N-terminal signal peptide occupies residues 1–17; sequence MKKRHLLSLLALGISTA. Cys-18 carries the N-palmitoyl cysteine lipid modification. Cys-18 carries S-diacylglycerol cysteine lipidation.

To E.coli YmcA.

The protein localises to the cell membrane. This is an uncharacterized protein from Escherichia coli (strain K12).